The following is a 309-amino-acid chain: Probable MRF1 mitochondrial N(5)-glutamine methyltransferase mtq1 (309 aa).

S-adenosyl-L-methionine is bound by residues 124–128, Asp148, and Asn200; that span reads CTGSG. Residue 200–203 participates in substrate binding; sequence NPPY.

Belongs to the protein N5-glutamine methyltransferase family.

The protein localises to the mitochondrion. It catalyses the reaction L-glutaminyl-[peptide chain release factor] + S-adenosyl-L-methionine = N(5)-methyl-L-glutaminyl-[peptide chain release factor] + S-adenosyl-L-homocysteine + H(+). Methylates MRF1 on 'Gln-270' using S-adenosyl L-methionine as methyl donor. The protein is Probable MRF1 mitochondrial N(5)-glutamine methyltransferase mtq1 (mtq1) of Schizosaccharomyces pombe (strain 972 / ATCC 24843) (Fission yeast).